We begin with the raw amino-acid sequence, 90 residues long: Large ribosomal subunit protein bL27 (90 aa).

A disordered region spans residues 1–20 (MAHKKAGGSSRNGRDSAGKR).

It belongs to the bacterial ribosomal protein bL27 family.

The polypeptide is Large ribosomal subunit protein bL27 (Rhodopseudomonas palustris (strain BisB18)).